Reading from the N-terminus, the 203-residue chain is Peptidyl-tRNA hydrolase (203 aa).

Residue Tyr14 coordinates tRNA. The Proton acceptor role is filled by His19. Tyr64, Asn66, and Asn112 together coordinate tRNA.

The protein belongs to the PTH family. Monomer.

Its subcellular location is the cytoplasm. It carries out the reaction an N-acyl-L-alpha-aminoacyl-tRNA + H2O = an N-acyl-L-amino acid + a tRNA + H(+). Functionally, hydrolyzes ribosome-free peptidyl-tRNAs (with 1 or more amino acids incorporated), which drop off the ribosome during protein synthesis, or as a result of ribosome stalling. In terms of biological role, catalyzes the release of premature peptidyl moieties from peptidyl-tRNA molecules trapped in stalled 50S ribosomal subunits, and thus maintains levels of free tRNAs and 50S ribosomes. This Methylobacterium nodulans (strain LMG 21967 / CNCM I-2342 / ORS 2060) protein is Peptidyl-tRNA hydrolase.